The chain runs to 423 residues: 26S proteasome regulatory subunit 6A homolog (423 aa).

G211–T218 serves as a coordination point for ATP.

This sequence belongs to the AAA ATPase family.

It is found in the cytoplasm. The protein resides in the nucleus. The 26S proteasome is involved in the ATP-dependent degradation of ubiquitinated proteins. The regulatory (or ATPase) complex confers ATP dependency and substrate specificity to the 26S complex. In Solanum lycopersicum (Tomato), this protein is 26S proteasome regulatory subunit 6A homolog (TBP1).